We begin with the raw amino-acid sequence, 319 residues long: Tyrosine--tRNA ligase (319 aa).

Tyrosine 40 lines the L-tyrosine pocket. The 'HIGH' region signature appears at 45-53 (PSGRIHMGH). Residues tyrosine 159, glutamine 163, aspartate 166, and glutamine 181 each contribute to the L-tyrosine site. A 'KMSKS' region motif is present at residues 216–220 (KMSSS). Residue serine 219 coordinates ATP.

The protein belongs to the class-I aminoacyl-tRNA synthetase family. TyrS type 3 subfamily. In terms of assembly, homodimer.

It is found in the cytoplasm. The enzyme catalyses tRNA(Tyr) + L-tyrosine + ATP = L-tyrosyl-tRNA(Tyr) + AMP + diphosphate + H(+). Functionally, catalyzes the attachment of tyrosine to tRNA(Tyr) in a two-step reaction: tyrosine is first activated by ATP to form Tyr-AMP and then transferred to the acceptor end of tRNA(Tyr). The protein is Tyrosine--tRNA ligase of Methanococcus maripaludis (strain DSM 14266 / JCM 13030 / NBRC 101832 / S2 / LL).